The chain runs to 563 residues: Serine carboxypeptidase S10 family member 2 (563 aa).

The N-terminal stretch at 1-23 (MNIKIILLSIILIIQLLLLNNNG) is a signal peptide. The Extracellular portion of the chain corresponds to 24–529 (GIVESKINFS…VPLTLGAWIG (506 aa)). Residues asparagine 31, asparagine 95, asparagine 110, and asparagine 213 are each glycosylated (N-linked (GlcNAc...) asparagine). Serine 225 is a catalytic residue. Asparagine 244, asparagine 328, and asparagine 382 each carry an N-linked (GlcNAc...) asparagine glycan. The active site involves aspartate 417. Residue asparagine 468 is glycosylated (N-linked (GlcNAc...) asparagine). Residue histidine 479 is part of the active site. Asparagine 499 carries an N-linked (GlcNAc...) asparagine glycan. Residues 530-550 (ITVGGCAFGFLVGGLIIYIIM) traverse the membrane as a helical segment. At 551-563 (KKSSKNGYYKVIQ) the chain is on the cytoplasmic side.

This sequence belongs to the peptidase S10 family.

It localises to the membrane. In terms of biological role, probable carboxypeptidase. The sequence is that of Serine carboxypeptidase S10 family member 2 from Dictyostelium discoideum (Social amoeba).